A 65-amino-acid chain; its full sequence is Large ribosomal subunit protein bL35 (65 aa).

The protein belongs to the bacterial ribosomal protein bL35 family.

In Prochlorococcus marinus (strain MIT 9313), this protein is Large ribosomal subunit protein bL35.